The chain runs to 248 residues: MKFLFLILSCLGAAVAFPGGADDDKIVGGYTCPEHSVPYQVSLNSGYHFCGGSLINSQWVLSAAHCYKSRIQVRLGEYNIDVQEDSEVVRSSSVIIRHPKYSSITLNNDIMLIKLASAVEYSADIQPIALPSSCAKAGTECLISGWGNTLSNGYNYPELLQCLNAPILSDQECQEAYPGDITSNMICVGFLEGGKDSCQGDSGGPVVCNGELQGIVSWGIGCALKGYPGVYTKVCNYVDWIQETIAAY.

A signal peptide spans 1–16 (MKFLFLILSCLGAAVA). Positions 17 to 25 (FPGGADDDK) are cleaved as a propeptide — activation peptide. The region spanning 26–246 (IVGGYTCPEH…YVDWIQETIA (221 aa)) is the Peptidase S1 domain. Cystine bridges form between Cys-32-Cys-162, Cys-50-Cys-66, Cys-134-Cys-235, Cys-141-Cys-208, Cys-173-Cys-187, and Cys-198-Cys-222. His-65 functions as the Charge relay system in the catalytic mechanism. Ca(2+) contacts are provided by Glu-77, Asn-79, Val-82, and Glu-87. The active-site Charge relay system is the Asp-109. The Charge relay system role is filled by Ser-202.

This sequence belongs to the peptidase S1 family. Requires Ca(2+) as cofactor. As to expression, high levels are seen in the pancreas while lower levels are found in the liver, spleen and thymus.

The protein resides in the secreted. It localises to the extracellular space. It carries out the reaction Preferential cleavage: Arg-|-Xaa, Lys-|-Xaa.. The protein is Trypsin II-P29 of Gallus gallus (Chicken).